Here is a 209-residue protein sequence, read N- to C-terminus: Protein-L-isoaspartate O-methyltransferase (209 aa).

Residue Ser55 is part of the active site.

It belongs to the methyltransferase superfamily. L-isoaspartyl/D-aspartyl protein methyltransferase family.

Its subcellular location is the cytoplasm. The enzyme catalyses [protein]-L-isoaspartate + S-adenosyl-L-methionine = [protein]-L-isoaspartate alpha-methyl ester + S-adenosyl-L-homocysteine. In terms of biological role, catalyzes the methyl esterification of L-isoaspartyl residues in peptides and proteins that result from spontaneous decomposition of normal L-aspartyl and L-asparaginyl residues. It plays a role in the repair and/or degradation of damaged proteins. The protein is Protein-L-isoaspartate O-methyltransferase of Anaeromyxobacter dehalogenans (strain 2CP-C).